Reading from the N-terminus, the 1057-residue chain is Adenylate-forming reductase stbB (1057 aa).

The adenylation (A) domain stretch occupies residues 21–378; it reads STKRQPGAVC…FRLRTDMNFE (358 aa). Residues His251, 344–345, Thr349, and 423–426 each bind AMP; these read NF and AVGR. The Carrier domain maps to 564-651; that stretch reads ETLEEDIKAL…QMAAAIKNPS (88 aa). Ser600 is subject to O-(pantetheine 4'-phosphoryl)serine. The interval 693–1025 is reductase (R) domain; the sequence is IVVVTGSSGS…SGAVILGTDV (333 aa). NADP(+)-binding positions include 700 to 703, 783 to 785, Tyr858, and Lys862; these read SGSL and AAW.

The protein belongs to the adenylate-forming reductase family.

It catalyses the reaction ilicicolinate B + AH2 + ATP = ilicicolin B + A + AMP + diphosphate. It participates in secondary metabolite biosynthesis; terpenoid biosynthesis. In terms of biological role, nonribosomal peptide synthase-like protein; part of the cluster that mediates the biosynthesis of LL-Z1272-beta, also known as ilicicolin B, a prenylated aryl-aldehyde produced by several fungi and that serves as a key pathway intermediate for many fungal meroterpenoids. The first step in the pathway is performed by the non-reducing polyketide synthase stbA that produces orsellinic acid by condensing acetyl-CoA with 3 malonyl-CoA units. The prenyltransferase stbC then prenylates orsenilic acid into grifolic acid. Finally, grifolic acid is reduced to ilicicolin B by the NRPS-like protein stbB. The chain is Adenylate-forming reductase stbB from Stachybotrys bisbyi (Hyalostachybotrys bisbyi).